We begin with the raw amino-acid sequence, 163 residues long: Type VII secretion system protein EsaG (163 aa).

Interacts with EssD (via C-terminus). Interacts with EssE.

It localises to the cytoplasm. Functionally, component of the type VII secretion system (Ess). Also acts as part of toxin-antitoxin system. Counteracts the toxic effect of EssD via direct interaction. The polypeptide is Type VII secretion system protein EsaG (Staphylococcus aureus (strain NCTC 8325 / PS 47)).